A 140-amino-acid chain; its full sequence is Nucleoside diphosphate kinase (140 aa).

Residues Lys-11, Phe-59, Arg-87, Thr-93, Arg-104, and Asn-114 each coordinate ATP. His-117 functions as the Pros-phosphohistidine intermediate in the catalytic mechanism.

This sequence belongs to the NDK family. In terms of assembly, homotetramer. It depends on Mg(2+) as a cofactor.

It localises to the cytoplasm. It carries out the reaction a 2'-deoxyribonucleoside 5'-diphosphate + ATP = a 2'-deoxyribonucleoside 5'-triphosphate + ADP. The catalysed reaction is a ribonucleoside 5'-diphosphate + ATP = a ribonucleoside 5'-triphosphate + ADP. In terms of biological role, major role in the synthesis of nucleoside triphosphates other than ATP. The ATP gamma phosphate is transferred to the NDP beta phosphate via a ping-pong mechanism, using a phosphorylated active-site intermediate. The protein is Nucleoside diphosphate kinase of Persephonella marina (strain DSM 14350 / EX-H1).